Reading from the N-terminus, the 857-residue chain is Phosphoenolpyruvate carboxylase (857 aa).

Residues H144 and K530 contribute to the active site.

The protein belongs to the PEPCase type 1 family. Homotetramer. The cofactor is Mg(2+). Post-translationally, the N-terminus is blocked.

It catalyses the reaction oxaloacetate + phosphate = phosphoenolpyruvate + hydrogencarbonate. Forms oxaloacetate, a four-carbon dicarboxylic acid source for the tricarboxylic acid cycle. The chain is Phosphoenolpyruvate carboxylase (ppc) from Thermus sp. (strain 71).